Consider the following 57-residue polypeptide: Large ribosomal subunit protein bL32c (57 aa).

The protein belongs to the bacterial ribosomal protein bL32 family.

It localises to the plastid. The protein localises to the chloroplast. This chain is Large ribosomal subunit protein bL32c, found in Drimys granadensis.